The chain runs to 206 residues: Protease (206 aa).

Residues H55, D72, and C122 contribute to the active site.

It belongs to the peptidase C5 family. Interacts with protease cofactor pVI-C; this interaction is necessary for protease activation.

The protein localises to the virion. The protein resides in the host nucleus. It carries out the reaction Cleaves proteins of the adenovirus and its host cell at two consensus sites: -Yaa-Xaa-Gly-Gly-|-Xaa- and -Yaa-Xaa-Gly-Xaa-|-Gly- (in which Yaa is Met, Ile or Leu, and Xaa is any amino acid).. Its activity is regulated as follows. Requires DNA and protease cofactor for maximal activation. Inside nascent virions, becomes partially activated by binding to the viral DNA, allowing it to cleave the cofactor that binds to the protease and fully activates it. Actin, like the viral protease cofactor, seems to act as a cofactor in the cleavage of cytokeratin 18 and of actin itself. Its function is as follows. Cleaves viral precursor proteins (pTP, pIIIa, pVI, pVII, pVIII, and pX) inside newly assembled particles giving rise to mature virions. Protease complexed to its cofactor slides along the viral DNA to specifically locate and cleave the viral precursors. Mature virions have a weakened organization compared to the unmature virions, thereby facilitating subsequent uncoating. Without maturation, the particle lacks infectivity and is unable to uncoat. Late in adenovirus infection, in the cytoplasm, may participate in the cytoskeleton destruction. Cleaves host cell cytoskeletal keratins K7 and K18. In Fowl adenovirus A serotype 1 (strain CELO / Phelps) (FAdV-1), this protein is Protease.